Here is a 705-residue protein sequence, read N- to C-terminus: Translation initiation factor IF-2 (705 aa).

The interval 40–124 (DDQIKALDKK…QPAAPKEIPS (85 aa)) is disordered. Positions 41–58 (DQIKALDKKFKKEQKNDN) are enriched in basic and acidic residues. Over residues 59–77 (KQSTQNNHQKSNNQNQNKG) the composition is skewed to low complexity. The span at 94–108 (KGNKKNNRNNKKNNK) shows a compositional bias: basic residues. A tr-type G domain is found at 207 to 376 (ERPAVVTIMG…GLVAEVQELK (170 aa)). Residues 216–223 (GHVDHGKT) are G1. 216–223 (GHVDHGKT) contacts GTP. Residues 241-245 (GITQH) form a G2 region. The G3 stretch occupies residues 262-265 (DTPG). Residues 262–266 (DTPGH) and 316–319 (NKID) contribute to the GTP site. Positions 316-319 (NKID) are G4. Residues 352-354 (SAL) form a G5 region.

This sequence belongs to the TRAFAC class translation factor GTPase superfamily. Classic translation factor GTPase family. IF-2 subfamily.

The protein resides in the cytoplasm. One of the essential components for the initiation of protein synthesis. Protects formylmethionyl-tRNA from spontaneous hydrolysis and promotes its binding to the 30S ribosomal subunits. Also involved in the hydrolysis of GTP during the formation of the 70S ribosomal complex. This Staphylococcus aureus (strain USA300) protein is Translation initiation factor IF-2.